We begin with the raw amino-acid sequence, 415 residues long: Packaging protein 3 (415 aa).

Residues Met1–Arg55 are disordered. The tract at residues Met1–Ser173 is interaction with packaging protein 1. Phosphoserine; by host is present on residues Ser75 and Ser360. Positions Gly381–Gly394 are enriched in low complexity. The disordered stretch occupies residues Gly381 to Tyr415. The segment covering Glu400–Tyr415 has biased composition (acidic residues).

Belongs to the adenoviridae packaging protein 3 family. In terms of assembly, part of the genome packaging complex composed of packaging proteins 1, 2 and 3; this complex specifically binds to the packaging sequence on the left end of viral genomic DNA and performs packaging of the viral genome. Interacts with hexon-linking protein IIIa; this interaction is required to promote correct genome packaging. Post-translationally, cleaved at different sites by the viral protease during virion maturation.

The protein resides in the host nucleus. Involved in viral genome packaging through its interaction with packaging proteins 1 and 2. After proteolytic cleavage by adenovirus protease, L1 52/55k protein is removed from the capsid during viral maturation. This is Packaging protein 3 from Homo sapiens (Human).